A 948-amino-acid polypeptide reads, in one-letter code: MENRICTLAKPLPKLDESKQAWVSYLWLKKALPGFEEHSAYVYMTTNPTIAGRIFLPINNEDLEDGTVEISGYDNLLADALYISTIAPVKLDFVQLIVIDDNSQDQDAIIERIKGRNAILMESDFINQNILVQVCQPVRHGVVDSETKFVIERKDSFTFLASNEKNISSFKRGKTETDAELVIRPSKVHTEIQWCLQNCSLIHVPFELLFNVGKKNGCPISLRLSDGKNVYGIASIKSDTEHDSVQLSPSLHYFDEFNESVISEEGTEAFLVARGPSVGIASRISLRTIPTQSCFSEKLLKAANLCVVQQVKQKVFLQSKQIFCVPINSLMANSDSVDILELTRNTDAYIWYSVEEIDPLNTYNIYYTNEDTSIVLDTQLSHRLLPSLRKPLLNFVKVHPPSQKLLRFCRAFFDPQQVPGFNPFFLLHGNPFTGKTKAVEEVASLFSAPVFTISSYEFADATADHLEAKLDMFVQNVVKSPCAIIFVKDLDVLSISSDEGNIVPGSKSIQILLSKIDLVKSPQGRYIVIGTCHSIEKIPYEILSESFFELKFSELEMDERLELLKIYANNVIIDKRISLKDVALKTNSMSFGELECLPDHMTKAAVDRIKRTGYDNDSIILSGPIITEQDVDVSINRIRKEKSNTIFTVPKVNWDDIGGLEEAKTVLRDTLQLPLQFPELFSQGLKPRSGVLLYGPPGTGKTLLAKAVATELSLEFVSIKGPELLNMYVGESEANVRNVFEKARNSSPCVIFFDELDSIAPHRGNSSDSGNVMDRVVSQLLAELDSISKDNNKYVFVIGATNRPDLLDPSLLRPGRFDKLVYLGINKSEESKASMLRALTKTFKLDETIDLNEIAKNCHPNFTGADMYALCSDAVLSAIKRKTNEIDLLIQASGTDLSTEEFFKRNENQDSLELRITKEDFLTSLKKLRPSISEQELHRYEMVRHQFS.

695-702 (GPPGTGKT) lines the ATP pocket.

It belongs to the AAA ATPase family. Interacts with PEX1; forming the PEX1-PEX6 AAA ATPase complex, which is composed of a heterohexamer formed by a trimer of PEX1-PEX6 dimers.

It localises to the cytoplasm. The protein localises to the cytosol. The protein resides in the peroxisome membrane. It catalyses the reaction ATP + H2O = ADP + phosphate + H(+). In terms of biological role, component of the PEX1-PEX6 AAA ATPase complex, a protein dislocase complex that mediates the ATP-dependent extraction of the PEX5 receptor from peroxisomal membranes, an essential step for PEX5 recycling. Specifically recognizes PEX5 monoubiquitinated at 'Cys-6', and pulls it out of the peroxisome lumen through the PEX2-PEX10-PEX12 retrotranslocation channel. Extraction by the PEX1-PEX6 AAA ATPase complex is accompanied by unfolding of the TPR repeats and release of bound cargo from PEX5. The sequence is that of Peroxisomal ATPase pex6 (pex6) from Schizosaccharomyces pombe (strain 972 / ATCC 24843) (Fission yeast).